The following is a 249-amino-acid chain: Probable GDP-mannose transporter 2 (249 aa).

The Lumenal segment spans residues 1-15 (MIYTSSKSLQYLAVP). The helical transmembrane segment at 16–36 (IYTIFKNLTIILIAYGEVLFF) threads the bilayer. Residues 37 to 47 (GGKVTSMELTS) lie on the Cytoplasmic side of the membrane. The helical transmembrane segment at 48 to 68 (FIMMVLSSVVATWGDQQAIAI) threads the bilayer. Topologically, residues 69–84 (KASSLEDLDQELVEST) are lumenal. Residues 85-105 (IFVLNPGYLWMFTNCISSALF) traverse the membrane as a helical segment. Topologically, residues 106-122 (VLIMRKRIRLTNFKDYD) are cytoplasmic. A helical transmembrane segment spans residues 123–143 (TMFYNNVLALPLLLVFSFIME). Residues 144–159 (DWSTKNLSVNLSADSL) lie on the Lumenal side of the membrane. N-linked (GlcNAc...) asparagine glycosylation is found at Asn-149 and Asn-153. Residues 160–180 (AAMVISGLMSVGISYCSGWCV) traverse the membrane as a helical segment. The Cytoplasmic portion of the chain corresponds to 181–186 (RVTSST). Residues 187–207 (TYSMVGALNKLPIALAGLVFF) traverse the membrane as a helical segment. The Lumenal portion of the chain corresponds to 208 to 211 (DAPK). A helical membrane pass occupies residues 212-232 (NFLSFFSIFLGFLSGLLYAVA). The Cytoplasmic segment spans residues 233–249 (KQKKIQQQKVLAATLEK).

Belongs to the TPT transporter family. SLC35D subfamily.

The protein resides in the golgi apparatus membrane. The protein localises to the cytoplasmic vesicle membrane. It localises to the endoplasmic reticulum membrane. Involved in the import of GDP-mannose from the cytoplasm into the Golgi lumen. The chain is Probable GDP-mannose transporter 2 (HVG1) from Saccharomyces cerevisiae (strain RM11-1a) (Baker's yeast).